A 128-amino-acid polypeptide reads, in one-letter code: U24-ctenitoxin-Pn1a (128 aa).

Thyroglobulin type-1 domains are found at residues 4 to 67 (KSDC…ECGC) and 72 to 127 (KERK…SLKC). Cystine bridges form between C7–C27, C38–C45, C47–C67, and C107–C127.

As to expression, expressed by the venom gland.

Its subcellular location is the secreted. In terms of biological role, cysteine proteinase inhibitor. This chain is U24-ctenitoxin-Pn1a, found in Phoneutria nigriventer (Brazilian armed spider).